The sequence spans 526 residues: Calcium-dependent protein kinase 28 (526 aa).

The disordered stretch occupies residues 1 to 37 (MQPDPQPHGRGREKAAGAGPRLPPPVTAPSVGRPASV). One can recognise a Protein kinase domain in the interval 49 to 307 (YRIGKKLGQG…AHEVLCHPWI (259 aa)). ATP is bound by residues 55–63 (LGQGQFGTT) and K78. D173 serves as the catalytic Proton acceptor. The autoinhibitory domain stretch occupies residues 313–343 (APDKPIDSAVLSRLKHFSAMNKLKKMALRVI). EF-hand domains lie at 350 to 385 (EEIG…VGSD), 386 to 421 (LMEP…MNKL), 422 to 457 (EREE…FGLS), and 460 to 491 (HLED…GNAG). The Ca(2+) site is built by D363, D365, S367, T369, E374, D399, D401, S403, T405, E410, D435, D437, S439, E446, D469, N471, D473, Q475, and E480.

This sequence belongs to the protein kinase superfamily. Ser/Thr protein kinase family. CDPK subfamily.

The catalysed reaction is L-seryl-[protein] + ATP = O-phospho-L-seryl-[protein] + ADP + H(+). It carries out the reaction L-threonyl-[protein] + ATP = O-phospho-L-threonyl-[protein] + ADP + H(+). With respect to regulation, activated by calcium. Autophosphorylation may play an important role in the regulation of the kinase activity. Functionally, may play a role in signal transduction pathways that involve calcium as a second messenger. This chain is Calcium-dependent protein kinase 28, found in Oryza sativa subsp. japonica (Rice).